Consider the following 748-residue polypeptide: SNF-related serine/threonine-protein kinase (748 aa).

One can recognise a Protein kinase domain in the interval 16 to 269 (YDLDKTLGRG…LEEIESHPWL (254 aa)). Residues 22–30 (LGRGHFAVV) and K45 contribute to the ATP site. The active-site Proton acceptor is the D139. The residue at position 162 (S162) is a Phosphoserine. A Phosphothreonine; by LKB1 modification is found at T173. In terms of domain architecture, UBA spans 291–334 (SEEEHNSIIQRMVLGDIADRDAIVEALETNRYNHITATYFLLAE). Phosphoserine is present on residues S362, S390, S482, S495, and S518. The segment at 383–415 (SHATVPQSPARAGDNVLNGHRSKGLCDPAKKDE) is disordered. Residues 491 to 503 (EEGESDDEFDMDE) are compositionally biased toward acidic residues. A disordered region spans residues 491–640 (EEGESDDEFD…SPSPASASAA (150 aa)). The segment covering 522–532 (VHKRYHRRKSQ) has biased composition (basic residues). The segment covering 533–542 (GRGSSCSSSE) has biased composition (low complexity). R534 is modified (omega-N-methylarginine). A compositionally biased stretch (basic and acidic residues) spans 549–558 (ESRRRLDKDS). Composition is skewed to gly residues over residues 575–592 (GSEG…GGGV) and 600–614 (QGTG…GGTP). S606 is subject to Phosphoserine. Positions 629 to 640 (SSSPSPASASAA) are enriched in low complexity.

This sequence belongs to the protein kinase superfamily. CAMK Ser/Thr protein kinase family. Requires Mg(2+) as cofactor. Autophosphorylated. Phosphorylation on Thr-173 by STK11/LKB1 in complex with STE20-related adapter-alpha (STRADA) pseudo kinase and CAB39. As to expression, ubiquitously expressed in all tissues examined.

It is found in the nucleus. It carries out the reaction L-seryl-[protein] + ATP = O-phospho-L-seryl-[protein] + ADP + H(+). The catalysed reaction is L-threonyl-[protein] + ATP = O-phospho-L-threonyl-[protein] + ADP + H(+). Its activity is regulated as follows. Activated by phosphorylation on Thr-173. In terms of biological role, may play a role in hematopoietic cell proliferation or differentiation. Potential mediator of neuronal apoptosis. In Mus musculus (Mouse), this protein is SNF-related serine/threonine-protein kinase.